A 509-amino-acid polypeptide reads, in one-letter code: Serine/threonine protein kinase OSK4 (509 aa).

One can recognise a Protein kinase domain in the interval 17 to 269 (YNLGRTLGIG…IREIREHQWF (253 aa)). ATP-binding positions include 23 to 31 (LGIGSFGKV) and Lys-46. Asp-140 acts as the Proton acceptor in catalysis. The region spanning 290 to 330 (MIDEDTLQDVVNLGYEKDHVCESLRNRLQNEATVAYYLLLD) is the UBA domain. The KA1 domain occupies 460 to 508 (NGRLPAVIKFEIQLYKSRDEKYLLDMQRVTGPQLLFLDFCAAFLTKLRV).

It belongs to the protein kinase superfamily. Ser/Thr protein kinase family. In terms of assembly, interacts with HDR1. As to expression, strongly expressed in immature seeds. Mostly expressed in panicles, leaf sheaths and roots, and to a lower extent, in germinating seeds and leaf blades.

Its subcellular location is the nucleus. The enzyme catalyses L-seryl-[protein] + ATP = O-phospho-L-seryl-[protein] + ADP + H(+). It carries out the reaction L-threonyl-[protein] + ATP = O-phospho-L-threonyl-[protein] + ADP + H(+). Its function is as follows. Suppressor of flowering in long days (LD) via the that up-regulation of HD1 and the down-regulation of EHD1. Can phosphorylate HD1 in the presence of HDR1. In Oryza sativa subsp. indica (Rice), this protein is Serine/threonine protein kinase OSK4.